Here is a 445-residue protein sequence, read N- to C-terminus: ATP synthase subunit b-delta (445 aa).

An ATP synthase subunit b region spans residues 1-168; the sequence is MSIFIGQLIG…PSSAVLEAGA (168 aa). A helical membrane pass occupies residues 3–23; that stretch reads IFIGQLIGFAVIVFILVKWVV. The ATP synthase subunit delta stretch occupies residues 169–445; that stretch reads SLNLRAASRE…LAAARTGLPD (277 aa).

In the N-terminal section; belongs to the ATPase B chain family. It in the C-terminal section; belongs to the ATPase delta chain family. In terms of assembly, F-type ATPases have 2 components, F(1) - the catalytic core - and F(0) - the membrane proton channel. F(1) has five subunits: alpha(3), beta(3), gamma(1), delta(1), epsilon(1). F(0) has three main subunits: a(1), b(2) and c(10-14). The alpha and beta chains form an alternating ring which encloses part of the gamma chain. F(1) is attached to F(0) by a central stalk formed by the gamma and epsilon chains, while a peripheral stalk is formed by the delta and b chains.

The protein localises to the cell membrane. Functionally, f(1)F(0) ATP synthase produces ATP from ADP in the presence of a proton or sodium gradient. F-type ATPases consist of two structural domains, F(1) containing the extramembraneous catalytic core and F(0) containing the membrane proton channel, linked together by a central stalk and a peripheral stalk. During catalysis, ATP synthesis in the catalytic domain of F(1) is coupled via a rotary mechanism of the central stalk subunits to proton translocation. In terms of biological role, this fusion protein includes a component of the F(0) channel (subunit b) and of the F(1) subunit (subunit delta). Two copies of subunit b and one of delta together form the peripheral 'stator' stalk which links F(1) to F(0). In Mycolicibacterium vanbaalenii (strain DSM 7251 / JCM 13017 / BCRC 16820 / KCTC 9966 / NRRL B-24157 / PYR-1) (Mycobacterium vanbaalenii), this protein is ATP synthase subunit b-delta (atpFH).